Here is a 690-residue protein sequence, read N- to C-terminus: UvrABC system protein C (690 aa).

Residues 1 to 60 are disordered; that stretch reads MTTDSSDPAKPAGPGQPPGSGADTRPGGLATGQDVDPATIETDEDDEARLPDVPDEPTDA. The span at 41 to 58 shows a compositional bias: acidic residues; sequence ETDEDDEARLPDVPDEPT. In terms of domain architecture, GIY-YIG spans 82-160; sequence TSPGVYRMMN…IKQLRPRFNV (79 aa). The region spanning 270-305 is the UVR domain; the sequence is RAVKEELAREMEKASGDLAFERAALYRDRLAALSAI.

Belongs to the UvrC family. As to quaternary structure, interacts with UvrB in an incision complex.

Its subcellular location is the cytoplasm. In terms of biological role, the UvrABC repair system catalyzes the recognition and processing of DNA lesions. UvrC both incises the 5' and 3' sides of the lesion. The N-terminal half is responsible for the 3' incision and the C-terminal half is responsible for the 5' incision. In Nitrobacter hamburgensis (strain DSM 10229 / NCIMB 13809 / X14), this protein is UvrABC system protein C.